Reading from the N-terminus, the 69-residue chain is Sec-independent protein translocase protein TatA (69 aa).

The chain crosses the membrane as a helical span at residues 1–21 (MMPGPFELIIILVIVLLLFGG).

It belongs to the TatA/E family. In terms of assembly, the Tat system comprises two distinct complexes: a TatABC complex, containing multiple copies of TatA, TatB and TatC subunits, and a separate TatA complex, containing only TatA subunits. Substrates initially bind to the TatABC complex, which probably triggers association of the separate TatA complex to form the active translocon.

The protein localises to the cell inner membrane. Part of the twin-arginine translocation (Tat) system that transports large folded proteins containing a characteristic twin-arginine motif in their signal peptide across membranes. TatA could form the protein-conducting channel of the Tat system. The protein is Sec-independent protein translocase protein TatA of Vesicomyosocius okutanii subsp. Calyptogena okutanii (strain HA).